Here is a 164-residue protein sequence, read N- to C-terminus: Pyruvoyl-dependent arginine decarboxylase (164 aa).

Pyruvic acid (Ser) is present on S52.

This sequence belongs to the PdaD family. The cofactor is pyruvate.

It carries out the reaction L-arginine + H(+) = agmatine + CO2. The chain is Pyruvoyl-dependent arginine decarboxylase from Methanococcus maripaludis (strain C5 / ATCC BAA-1333).